The sequence spans 591 residues: V-type ATP synthase alpha chain (591 aa).

Residue 231–238 participates in ATP binding; it reads GPFGSGKT.

The protein belongs to the ATPase alpha/beta chains family.

The catalysed reaction is ATP + H2O + 4 H(+)(in) = ADP + phosphate + 5 H(+)(out). Its function is as follows. Produces ATP from ADP in the presence of a proton gradient across the membrane. The V-type alpha chain is a catalytic subunit. This chain is V-type ATP synthase alpha chain, found in Clostridium novyi (strain NT).